The sequence spans 152 residues: MLDVGFGELFCFGIIALLVLGPDKLPVAARFAGRWYARIKRYISNIQNEIDRELNLSEFRKEMQDELDRLHTLEQTMQARLKEIEKASTEKIAEQPKQPIESEPSITPQKYIFCITPQTIVPFCHQKQHYQQPERYNDLVLESSSVELKIAV.

A helical transmembrane segment spans residues 1–21 (MLDVGFGELFCFGIIALLVLG).

The protein belongs to the TatB family. As to quaternary structure, the Tat system comprises two distinct complexes: a TatABC complex, containing multiple copies of TatA, TatB and TatC subunits, and a separate TatA complex, containing only TatA subunits. Substrates initially bind to the TatABC complex, which probably triggers association of the separate TatA complex to form the active translocon.

It localises to the cell inner membrane. Its function is as follows. Part of the twin-arginine translocation (Tat) system that transports large folded proteins containing a characteristic twin-arginine motif in their signal peptide across membranes. Together with TatC, TatB is part of a receptor directly interacting with Tat signal peptides. TatB may form an oligomeric binding site that transiently accommodates folded Tat precursor proteins before their translocation. This chain is Sec-independent protein translocase protein TatB, found in Acinetobacter baylyi (strain ATCC 33305 / BD413 / ADP1).